The sequence spans 153 residues: Myoglobin (153 aa).

A Globin domain is found at 2-147 (GLNDQEWQQV…FRNDMASKYK (146 aa)). Residue H65 coordinates nitrite. Residue H65 participates in O2 binding. H93 contacts heme b.

Belongs to the globin family. In terms of assembly, monomeric.

It is found in the cytoplasm. The protein resides in the sarcoplasm. It catalyses the reaction Fe(III)-heme b-[protein] + nitric oxide + H2O = Fe(II)-heme b-[protein] + nitrite + 2 H(+). The enzyme catalyses H2O2 + AH2 = A + 2 H2O. Monomeric heme protein which primary function is to store oxygen and facilitate its diffusion within muscle tissues. Reversibly binds oxygen through a pentacoordinated heme iron and enables its timely and efficient release as needed during periods of heightened demand. Depending on the oxidative conditions of tissues and cells, and in addition to its ability to bind oxygen, it also has a nitrite reductase activity whereby it regulates the production of bioactive nitric oxide. Under stress conditions, like hypoxia and anoxia, it also protects cells against reactive oxygen species thanks to its pseudoperoxidase activity. This Aptenodytes forsteri (Emperor penguin) protein is Myoglobin (MB).